The chain runs to 369 residues: MFCCLGYEWLSGGCKTWHSAWVINTLADHRHRGTDFGGSPWLLIITVFLRSYKFAISLCTSYLCVSFLKTIFPSQNGHDGSTDVQQRARRSNCRRQEGIKIVLEDIFTLWRQVETKVRAKIRKMKVTTKVNRHDKINGKRKTAKEHLRKLSMKEREHGEKERQVSEAEENGKLDMKEIHTYMEMFQRAQALRRRAEDYYRCKITPSARKPLCNRVRMAAVEHRHSSGLPYWPYLTAETLKNRMGHQPPPPTQQHSIIDNSLSLKTPSECVLYPLPPSADDNLKTPPECLLTPLPPSALPSADDNLKTPAECLLYPLPPSADDNLKTPPECLLTPLPPSAPPSADDNLKTPPECVCSLPFHPQRMIISRN.

Positions Ser151–Asn170 are disordered.

It belongs to the NPIP family.

The sequence is that of Nuclear pore complex-interacting protein family member A6 from Homo sapiens (Human).